The following is a 178-amino-acid chain: Large ribosomal subunit protein uL6 (178 aa).

The protein belongs to the universal ribosomal protein uL6 family. In terms of assembly, part of the 50S ribosomal subunit.

Its function is as follows. This protein binds to the 23S rRNA, and is important in its secondary structure. It is located near the subunit interface in the base of the L7/L12 stalk, and near the tRNA binding site of the peptidyltransferase center. The chain is Large ribosomal subunit protein uL6 from Streptococcus uberis (strain ATCC BAA-854 / 0140J).